We begin with the raw amino-acid sequence, 283 residues long: 4-diphosphocytidyl-2-C-methyl-D-erythritol kinase (283 aa).

Lys-10 is an active-site residue. 99–109 (PMGGGLGGGSS) is an ATP binding site. Asp-141 is a catalytic residue.

The protein belongs to the GHMP kinase family. IspE subfamily. As to quaternary structure, homodimer.

The catalysed reaction is 4-CDP-2-C-methyl-D-erythritol + ATP = 4-CDP-2-C-methyl-D-erythritol 2-phosphate + ADP + H(+). It participates in isoprenoid biosynthesis; isopentenyl diphosphate biosynthesis via DXP pathway; isopentenyl diphosphate from 1-deoxy-D-xylulose 5-phosphate: step 3/6. In terms of biological role, catalyzes the phosphorylation of the position 2 hydroxy group of 4-diphosphocytidyl-2C-methyl-D-erythritol. This chain is 4-diphosphocytidyl-2-C-methyl-D-erythritol kinase, found in Salmonella arizonae (strain ATCC BAA-731 / CDC346-86 / RSK2980).